A 195-amino-acid chain; its full sequence is HTH-type transcriptional regulator TtmR (195 aa).

An HTH marR-type domain is found at 47-177 (DSQLCFAVYA…LLDNLASMRD (131 aa)). Positions 93 to 116 (VKEIGSRLFLDSGTLTPLLKRLEA) form a DNA-binding region, H-T-H motif.

The protein localises to the cytoplasm. In terms of biological role, formaldehyde-responsive transcription factor that modulates resistance to stress induced by formaldehyde. Impacts the expression of a number of genes encoding transcription factors and/or involved in stress response, including efgA, and which probably collectively trigger a formaldehyde-specific physiological response. Required for optimal transition to methylotrophy. Not involved in a general stress response. This chain is HTH-type transcriptional regulator TtmR, found in Methylorubrum extorquens (strain PA1) (Methylobacterium extorquens).